The following is a 264-amino-acid chain: Adenosylcobinamide-GDP ribazoletransferase (264 aa).

6 consecutive transmembrane segments (helical) span residues Ile-39 to Ile-59, Ala-63 to Thr-83, Ala-121 to Leu-141, Leu-148 to Leu-168, Leu-201 to Leu-221, and Val-241 to Ala-261.

Belongs to the CobS family. The cofactor is Mg(2+).

It is found in the cell inner membrane. It catalyses the reaction alpha-ribazole + adenosylcob(III)inamide-GDP = adenosylcob(III)alamin + GMP + H(+). The catalysed reaction is alpha-ribazole 5'-phosphate + adenosylcob(III)inamide-GDP = adenosylcob(III)alamin 5'-phosphate + GMP + H(+). It participates in cofactor biosynthesis; adenosylcobalamin biosynthesis; adenosylcobalamin from cob(II)yrinate a,c-diamide: step 7/7. Joins adenosylcobinamide-GDP and alpha-ribazole to generate adenosylcobalamin (Ado-cobalamin). Also synthesizes adenosylcobalamin 5'-phosphate from adenosylcobinamide-GDP and alpha-ribazole 5'-phosphate. This chain is Adenosylcobinamide-GDP ribazoletransferase, found in Azorhizobium caulinodans (strain ATCC 43989 / DSM 5975 / JCM 20966 / LMG 6465 / NBRC 14845 / NCIMB 13405 / ORS 571).